A 277-amino-acid chain; its full sequence is Large ribosomal subunit protein uL2 (277 aa).

The disordered stretch occupies residues 220–277; sequence VRGSVMNPNDHPHGGGEGKAPIGRPSPMSPWGKKTLGKKTRSSKARSEKLIIRHRKSR. Residues 254–263 are compositionally biased toward basic residues; sequence TLGKKTRSSK.

It belongs to the universal ribosomal protein uL2 family. In terms of assembly, part of the 50S ribosomal subunit. Forms a bridge to the 30S subunit in the 70S ribosome.

In terms of biological role, one of the primary rRNA binding proteins. Required for association of the 30S and 50S subunits to form the 70S ribosome, for tRNA binding and peptide bond formation. It has been suggested to have peptidyltransferase activity; this is somewhat controversial. Makes several contacts with the 16S rRNA in the 70S ribosome. This chain is Large ribosomal subunit protein uL2, found in Latilactobacillus sakei subsp. sakei (strain 23K) (Lactobacillus sakei subsp. sakei).